A 130-amino-acid chain; its full sequence is Small ribosomal subunit protein uS11 (130 aa).

Belongs to the universal ribosomal protein uS11 family. Part of the 30S ribosomal subunit. Interacts with proteins S7 and S18. Binds to IF-3.

In terms of biological role, located on the platform of the 30S subunit, it bridges several disparate RNA helices of the 16S rRNA. Forms part of the Shine-Dalgarno cleft in the 70S ribosome. The chain is Small ribosomal subunit protein uS11 from Thermotoga petrophila (strain ATCC BAA-488 / DSM 13995 / JCM 10881 / RKU-1).